An 822-amino-acid chain; its full sequence is AP-1 complex subunit gamma-1 (822 aa).

Positions 597-628 are disordered; sequence EIVQTNGETEPAPLETKPPPSGPQPTSQANDL. Residues 702-817 enclose the GAE domain; sequence AGIPSITAYS…QDLAEVNNFP (116 aa).

Belongs to the adaptor complexes large subunit family. In terms of assembly, adaptor protein complex 1 (AP-1) is a heterotetramer composed of two large adaptins (gamma-type subunit AP1G1 and beta-type subunit AP1B1), a medium adaptin (mu-type subunit AP1M1 or AP1M2) and a small adaptin (sigma-type subunit AP1S1 or AP1S2 or AP1S3). Interacts (via GAE domain) with RABEP1. Interacts with EPS15. Interacts with SYNRG/gamma-synergin. Interacts (via GAE domain) with AP1AR (via coiled-coil domain). Interacts with CLN3 (via dileucine motif); this interaction facilitates lysosomal targeting. Interacts (via GAE domain) with AFTPH/aftiphilin; the interaction is required to recruit AFTPH/aftiphilin to the perinuclear region of the cell.

It localises to the golgi apparatus. The protein resides in the cytoplasmic vesicle. Its subcellular location is the clathrin-coated vesicle membrane. It is found in the cytoplasm. The protein localises to the perinuclear region. It localises to the clathrin-coated vesicle. The protein resides in the membrane. Its subcellular location is the clathrin-coated pit. Subunit of clathrin-associated adaptor protein complex 1 that plays a role in protein sorting in the late-Golgi/trans-Golgi network (TGN) and/or endosomes. The AP complexes mediate both the recruitment of clathrin to membranes and the recognition of sorting signals within the cytosolic tails of transmembrane cargo molecules. In association with AFTPH/aftiphilin in the aftiphilin/p200/gamma-synergin complex, involved in the trafficking of transferrin from early to recycling endosomes, and the membrane trafficking of furin and the lysosomal enzyme cathepsin D between the trans-Golgi network (TGN) and endosomes. The sequence is that of AP-1 complex subunit gamma-1 (AP1G1) from Pongo abelii (Sumatran orangutan).